Here is a 332-residue protein sequence, read N- to C-terminus: T-cell surface glycoprotein CD1c1 (332 aa).

A signal peptide spans 1 to 17; that stretch reads MLFLHFLFLDVVLGGSI. Residues 18–300 lie on the Extracellular side of the membrane; the sequence is TENVVQENIS…IILYWGHGLS (283 aa). N-linked (GlcNAc...) asparagine glycans are attached at residues asparagine 25, asparagine 38, asparagine 75, and asparagine 146. Intrachain disulfides connect cysteine 120–cysteine 184 and cysteine 224–cysteine 279. One can recognise an Ig-like domain in the interval 205-292; it reads PEVWLSSSPN…HSSLRDQDII (88 aa). A helical transmembrane segment spans residues 301-321; sequence VILITFAVIVPLVLLIVLMLL. Residues 322–332 lie on the Cytoplasmic side of the membrane; the sequence is YKKRCTYQGIQ.

Heterodimer with B2M (beta-2-microglobulin).

The protein localises to the cell membrane. The protein resides in the endosome membrane. Functionally, antigen-presenting protein that binds self and non-self lipid and glycolipid antigens and presents them to T-cell receptors on natural killer T-cells. This chain is T-cell surface glycoprotein CD1c1 (CD1C1), found in Cavia porcellus (Guinea pig).